The following is a 157-amino-acid chain: D-aminoacyl-tRNA deacylase (157 aa).

Positions Gly137–Pro138 match the Gly-cisPro motif, important for rejection of L-amino acids motif.

This sequence belongs to the DTD family. Homodimer.

It is found in the cytoplasm. The catalysed reaction is glycyl-tRNA(Ala) + H2O = tRNA(Ala) + glycine + H(+). The enzyme catalyses a D-aminoacyl-tRNA + H2O = a tRNA + a D-alpha-amino acid + H(+). Functionally, an aminoacyl-tRNA editing enzyme that deacylates mischarged D-aminoacyl-tRNAs. Also deacylates mischarged glycyl-tRNA(Ala), protecting cells against glycine mischarging by AlaRS. Acts via tRNA-based rather than protein-based catalysis; rejects L-amino acids rather than detecting D-amino acids in the active site. By recycling D-aminoacyl-tRNA to D-amino acids and free tRNA molecules, this enzyme counteracts the toxicity associated with the formation of D-aminoacyl-tRNA entities in vivo and helps enforce protein L-homochirality. This Roseiflexus castenholzii (strain DSM 13941 / HLO8) protein is D-aminoacyl-tRNA deacylase.